The chain runs to 267 residues: Imidazole glycerol phosphate synthase subunit HisF (267 aa).

Residues Asp22 and Asp141 contribute to the active site.

This sequence belongs to the HisA/HisF family. As to quaternary structure, heterodimer of HisH and HisF.

Its subcellular location is the cytoplasm. It catalyses the reaction 5-[(5-phospho-1-deoxy-D-ribulos-1-ylimino)methylamino]-1-(5-phospho-beta-D-ribosyl)imidazole-4-carboxamide + L-glutamine = D-erythro-1-(imidazol-4-yl)glycerol 3-phosphate + 5-amino-1-(5-phospho-beta-D-ribosyl)imidazole-4-carboxamide + L-glutamate + H(+). Its pathway is amino-acid biosynthesis; L-histidine biosynthesis; L-histidine from 5-phospho-alpha-D-ribose 1-diphosphate: step 5/9. Functionally, IGPS catalyzes the conversion of PRFAR and glutamine to IGP, AICAR and glutamate. The HisF subunit catalyzes the cyclization activity that produces IGP and AICAR from PRFAR using the ammonia provided by the HisH subunit. The protein is Imidazole glycerol phosphate synthase subunit HisF of Mycobacterium tuberculosis (strain ATCC 25177 / H37Ra).